A 427-amino-acid polypeptide reads, in one-letter code: Terminal nucleotidyltransferase 5B (427 aa).

The tract at residues 1-49 is disordered; that stretch reads MMPSESGAESLEQPAAQVGTGAASAVATAGAAGGGPDPEASSASLGRHQ. Over residues 15 to 30 the composition is skewed to low complexity; that stretch reads AAQVGTGAASAVATAG.

The protein belongs to the TENT family.

It is found in the cytoplasm. The protein resides in the nucleus. It carries out the reaction RNA(n) + ATP = RNA(n)-3'-adenine ribonucleotide + diphosphate. Catalyzes the transfer of one adenosine molecule from an ATP to an mRNA poly(A) tail bearing a 3'-OH terminal group in an ATP hydrolysis-dependent manner. May be involved in maintaining the translation efficiency of at least some genes through preventing degradation of their mRNAs. Prefers RNA molecules that are adenosine-rich close to 3'-end. In addition, may inhibit cell proliferation and cell cycle progression through ubiquitination of beta-catenin/CTNNB1. The polypeptide is Terminal nucleotidyltransferase 5B (Mus musculus (Mouse)).